The following is a 275-amino-acid chain: Large ribosomal subunit protein uL2 (275 aa).

Positions 35–49 (DSQSSTAGRNNNGRI) are enriched in polar residues. Disordered regions lie at residues 35–59 (DSQS…GGHK) and 224–275 (AMNP…RHKR). Over residues 50 to 59 (TTRHKGGGHK) the composition is skewed to basic residues.

Belongs to the universal ribosomal protein uL2 family. Part of the 50S ribosomal subunit. Forms a bridge to the 30S subunit in the 70S ribosome.

Functionally, one of the primary rRNA binding proteins. Required for association of the 30S and 50S subunits to form the 70S ribosome, for tRNA binding and peptide bond formation. It has been suggested to have peptidyltransferase activity; this is somewhat controversial. Makes several contacts with the 16S rRNA in the 70S ribosome. The protein is Large ribosomal subunit protein uL2 of Burkholderia orbicola (strain AU 1054).